The sequence spans 184 residues: Ribosome-recycling factor (184 aa).

Belongs to the RRF family.

The protein resides in the cytoplasm. Functionally, responsible for the release of ribosomes from messenger RNA at the termination of protein biosynthesis. May increase the efficiency of translation by recycling ribosomes from one round of translation to another. The chain is Ribosome-recycling factor from Oleidesulfovibrio alaskensis (strain ATCC BAA-1058 / DSM 17464 / G20) (Desulfovibrio alaskensis).